We begin with the raw amino-acid sequence, 457 residues long: Probable cytosolic Fe-S cluster assembly factor oxy-4 (457 aa).

Cys-25 contacts [4Fe-4S] cluster. The disordered stretch occupies residues Lys-38–Glu-59. Positions 71, 74, 77, 176, 232, 380, and 384 each coordinate [4Fe-4S] cluster.

The protein belongs to the NARF family.

Functionally, component of the cytosolic iron-sulfur (Fe/S) protein assembly machinery. Required for maturation of extramitochondrial Fe/S proteins. This is Probable cytosolic Fe-S cluster assembly factor oxy-4 (oxy-4) from Caenorhabditis elegans.